Here is a 595-residue protein sequence, read N- to C-terminus: Tectonic-3 (595 aa).

Residues 1-22 (MCTLQLHLLLLVVLMLSETARP) form the signal peptide. Residues 23–62 (QPSSTARAFPTSWGLEPVTPEVPTSAPPDSSESPTPWTLS) are disordered. Residues 23-575 (QPSSTARAFP…ALSRGASVQK (553 aa)) are Extracellular-facing. A compositionally biased stretch (polar residues) spans 49-62 (PPDSSESPTPWTLS). N-linked (GlcNAc...) asparagine glycosylation is found at Asn-167 and Asn-336. Residues 576 to 594 (DSLVLILCVLLLGLLNSQT) traverse the membrane as a helical segment. Lys-595 is a topological domain (cytoplasmic).

This sequence belongs to the tectonic family. Part of the tectonic-like complex (also named B9 complex).

The protein resides in the membrane. Part of the tectonic-like complex which is required for tissue-specific ciliogenesis and may regulate ciliary membrane composition. May be involved in apoptosis regulation. Necessary for signal transduction through the sonic hedgehog (Shh) signaling pathway. This is Tectonic-3 (Tctn3) from Mus musculus (Mouse).